A 316-amino-acid polypeptide reads, in one-letter code: Probable metal transport system membrane protein TC_0342 (316 aa).

The next 10 helical transmembrane spans lie at 1–21 (MFAS…IVFF), 39–59 (IQVI…TFLV), 64–84 (AMYA…ACLF), 94–114 (QNLT…IHFI), 124–144 (ASTA…LVFL), 171–191 (FLVL…FICV), 196–216 (VFAF…MFLL), 226–246 (AVGV…AKLI), 252–272 (EMMG…PALS), and 286–306 (SGLA…TVFV).

The protein belongs to the ABC-3 integral membrane protein family.

The protein resides in the cell inner membrane. Part of an ATP-driven transport system TC_0338/TC_0339/TC_0341/TC_0342 for a metal. This Chlamydia muridarum (strain MoPn / Nigg) protein is Probable metal transport system membrane protein TC_0342.